The primary structure comprises 245 residues: MDNLLRHLKISKEQITPVVLVVGDPGRVDKIKVVCDSYVDLAYNREYKSVECHYKGQKFLCVSHGVGSAGCAVCFEELCQNGAKVIIRAGSCGSLQPDLIKRGDICICNAAVREDRVSHLLIHGDFPAVGDFDVYDTLNKCAQELNVPVFNGISVSSDMYYPNKIIPSRLEDYSKANAAVVEMELATLMVIGTLRKVKTGGILIVDGCPFKWDEGDFDNNLVPHQLENMIKIALGACAKLATKYA.

H7 serves as a coordination point for a purine D-ribonucleoside. Phosphate contacts are provided by residues 23–27, R45, and 88–91; these read GDPGR and RAGS. A purine D-ribonucleoside is bound at residue 183–184; sequence ME. The active-site Proton donor is D206.

Belongs to the PNP/MTAP phosphorylase family. As to quaternary structure, homohexamer; trimer of homodimers.

The catalysed reaction is inosine + phosphate = alpha-D-ribose 1-phosphate + hypoxanthine. The enzyme catalyses guanosine + phosphate = alpha-D-ribose 1-phosphate + guanine. It carries out the reaction 2'-deoxyguanosine + phosphate = 2-deoxy-alpha-D-ribose 1-phosphate + guanine. It catalyses the reaction 2'-deoxyinosine + phosphate = 2-deoxy-alpha-D-ribose 1-phosphate + hypoxanthine. The catalysed reaction is S-methyl-5'-thioinosine + phosphate = 5-(methylsulfanyl)-alpha-D-ribose 1-phosphate + hypoxanthine. It participates in purine metabolism; purine nucleoside salvage. Its activity is regulated as follows. Inhibited by Immucillin-H and 5'-methylthio-Immucillin-H. Inhibited by 5'-deaza-1'-aza-2c-deoxy-1'-(9-methylene)-Immucilin-G (DADMe-ImmG). Its function is as follows. As part of the purine salvage pathway, catalyzes the phosphorolytic breakdown of the N-glycosidic bond in the beta-(deoxy)ribonucleoside molecules, with the formation of the corresponding free purine bases and pentose-1-phosphate. Preferentially acts on inosine and guanosine, and to a lesser extent on 2'-deoxyguanosine and guanosine. Also catalyzes the phosphorylation of S-methyl-5'-thioinosine (MTI) to hypoxanthine; MTI is produced by adenosine deaminase (ADA)-mediated breakdown of S-methyl-5'-thioadenosine (MTA), a major by-product of polyamine biosynthesis. Generates hypoxanthine from both the purine salvage pathway and from polyamine metabolism which is required for nucleic acids synthesis. Has no activity towards adenosine. In Plasmodium falciparum (isolate 3D7), this protein is Purine nucleoside phosphorylase.